Consider the following 356-residue polypeptide: S-adenosylmethionine:tRNA ribosyltransferase-isomerase (356 aa).

This sequence belongs to the QueA family. Monomer.

The protein resides in the cytoplasm. It carries out the reaction 7-aminomethyl-7-carbaguanosine(34) in tRNA + S-adenosyl-L-methionine = epoxyqueuosine(34) in tRNA + adenine + L-methionine + 2 H(+). Its pathway is tRNA modification; tRNA-queuosine biosynthesis. Functionally, transfers and isomerizes the ribose moiety from AdoMet to the 7-aminomethyl group of 7-deazaguanine (preQ1-tRNA) to give epoxyqueuosine (oQ-tRNA). The polypeptide is S-adenosylmethionine:tRNA ribosyltransferase-isomerase (Enterobacter sp. (strain 638)).